A 159-amino-acid polypeptide reads, in one-letter code: U1 small nuclear ribonucleoprotein C (159 aa).

The segment at 4–36 adopts a Matrin-type zinc-finger fold; the sequence is FYCDYCDTYLTHDSPSVRKTHCSGRKHKENVKD. Y8 carries the phosphotyrosine modification. Residue S17 is modified to Phosphoserine. K52 bears the N6-acetyllysine mark. Positions 62–96 are disordered; sequence IPPAPFSAPPPAGAMIPPPPSLPGPPRPGMMPAPH. A compositionally biased stretch (pro residues) spans 63–92; it reads PPAPFSAPPPAGAMIPPPPSLPGPPRPGMM.

The protein belongs to the U1 small nuclear ribonucleoprotein C family. Component of the U1 snRNP. The U1 snRNP is composed of the U1 snRNA and the 7 core Sm proteins SNRPB, SNRPD1, SNRPD2, SNRPD3, SNRPE, SNRPF and SNRPG that assemble in a heptameric protein ring on the Sm site of the small nuclear RNA to form the core snRNP, and at least 3 U1 snRNP-specific proteins SNRNP70/U1-70K, SNRPA/U1-A and SNRPC/U1-C. SNRPC/U1-C interacts with U1 snRNA and the 5' splice-site region of the pre-mRNA. Interacts (via N-terminus) with TIA1 (via C-terminus); thereby promoting spliceosomal U1 snRNP recruitment to 5' splice sites.

The protein localises to the nucleus. Its function is as follows. Component of the spliceosomal U1 snRNP, which is essential for recognition of the pre-mRNA 5' splice-site and the subsequent assembly of the spliceosome. SNRPC/U1-C is directly involved in initial 5' splice-site recognition for both constitutive and regulated alternative splicing. The interaction with the 5' splice-site seems to precede base-pairing between the pre-mRNA and the U1 snRNA. Stimulates commitment or early (E) complex formation by stabilizing the base pairing of the 5' end of the U1 snRNA and the 5' splice-site region. This Rattus norvegicus (Rat) protein is U1 small nuclear ribonucleoprotein C.